The sequence spans 320 residues: Protein PXR1 (320 aa).

The span at 1-11 shows a compositional bias: basic residues; sequence MGLAGPRKRTK. The segment at 1–24 is disordered; sequence MGLAGPRKRTKISHDPNNTAWSRS. Over residues 15–24 the composition is skewed to polar residues; sequence DPNNTAWSRS. Positions 25–79 constitute a G-patch domain; sequence TSGYGHKIMSAQGWTPGSFLGASNAAHADHFTAGSAGHIRVILKDDNLGLGAKLR. Residues 152 to 298 form a disordered region; that stretch reads GEEVQTPQIS…MGRQFTRGRH (147 aa). Residues 169 to 182 show a composition bias toward basic residues; that stretch reads KRPKKARKKEKRRA. 3 stretches are compositionally biased toward basic and acidic residues: residues 203–214, 243–256, and 269–288; these read RKENKEKKKSSD, KDPEPSNTEVHDDS, and QESRYSAKNESIRKIREHRP.

The protein belongs to the PINX1 family.

The protein resides in the nucleus. Its subcellular location is the nucleolus. Functionally, involved in rRNA-processing at A0, A1 and A2 sites and negatively regulates telomerase. This chain is Protein PXR1 (PXR1), found in Ajellomyces capsulatus (strain NAm1 / WU24) (Darling's disease fungus).